A 688-amino-acid chain; its full sequence is Two-component response regulator ORR23 (688 aa).

The Response regulatory domain occupies 25–140 (RVLAVDDDPV…ELRNIWQHVI (116 aa)). Asp-76 carries the 4-aspartylphosphate modification. The disordered stretch occupies residues 161–212 (PPNADSDHVHGHVTCGSPDQSGRPSKKRKEYCSEEEDEGEVNTQDIDDPSAP). Residues 193 to 208 (SEEEDEGEVNTQDIDD) show a composition bias toward acidic residues. A DNA-binding region (myb-like GARP) is located at residues 211–270 (APKKPRVVWSVELHRKFVAAVNQLGIDKAVPKRILELMNVEKLTRENVASHLQKYRLYLK).

This sequence belongs to the ARR family. Type-B subfamily. Post-translationally, two-component system major event consists of a His-to-Asp phosphorelay between a sensor histidine kinase (HK) and a response regulator (RR). In plants, the His-to-Asp phosphorelay involves an additional intermediate named Histidine-containing phosphotransfer protein (HPt). This multistep phosphorelay consists of a His-Asp-His-Asp sequential transfer of a phosphate group between first a His and an Asp of the HK protein, followed by the transfer to a conserved His of the HPt protein and finally the transfer to an Asp in the receiver domain of the RR protein.

It is found in the nucleus. Its function is as follows. Transcriptional activator that binds specific DNA sequence. Functions as a response regulator involved in His-to-Asp phosphorelay signal transduction system. Phosphorylation of the Asp residue in the receiver domain activates the ability of the protein to promote the transcription of target genes. May directly activate some type-A response regulators in response to cytokinins. This is Two-component response regulator ORR23 from Oryza sativa subsp. japonica (Rice).